Here is a 226-residue protein sequence, read N- to C-terminus: 2,3-bisphosphoglycerate-dependent phosphoglycerate mutase (226 aa).

Substrate is bound by residues 8–15 (RHGQSVWN), 21–22 (TG), Arg-58, 109–112 (ERMY), Lys-120, 136–137 (RR), and 180–181 (GN). The Tele-phosphohistidine intermediate role is filled by His-9. The active-site Proton donor/acceptor is the Glu-109.

Belongs to the phosphoglycerate mutase family. BPG-dependent PGAM subfamily.

It catalyses the reaction (2R)-2-phosphoglycerate = (2R)-3-phosphoglycerate. The protein operates within carbohydrate degradation; glycolysis; pyruvate from D-glyceraldehyde 3-phosphate: step 3/5. In terms of biological role, catalyzes the interconversion of 2-phosphoglycerate and 3-phosphoglycerate. This is 2,3-bisphosphoglycerate-dependent phosphoglycerate mutase from Chlamydia trachomatis serovar L2 (strain ATCC VR-902B / DSM 19102 / 434/Bu).